The primary structure comprises 539 residues: Transcription factor prr1 (539 aa).

The DNA-binding element occupies 7–111 (SSDFVRKLFN…LLDNIKRKAP (105 aa)). The residue at position 221 (Thr221) is a Phosphothreonine. A Phosphoserine modification is found at Ser223. Over residues 251–263 (GTAQPSLYNTPSS) the composition is skewed to polar residues. The segment at 251–281 (GTAQPSLYNTPSSDYELANQEKPADSMASAA) is disordered. A Response regulatory domain is found at 369-483 (RILLVEDDEL…TLLQLLKKQL (115 aa)). A 4-aspartylphosphate modification is found at Asp418.

This sequence in the N-terminal section; belongs to the HSF family.

The protein localises to the nucleus. Its function is as follows. Involved in oxidative stress. Transcription factor that acts upon trr1 and ctt1. The protein is Transcription factor prr1 (prr1) of Schizosaccharomyces pombe (strain 972 / ATCC 24843) (Fission yeast).